The sequence spans 549 residues: Dihydroxy-acid dehydratase (549 aa).

Asp78 contributes to the Mg(2+) binding site. Cys119 contributes to the [2Fe-2S] cluster binding site. The Mg(2+) site is built by Asp120 and Lys121. Lys121 carries the N6-carboxylysine modification. [2Fe-2S] cluster is bound at residue Cys192. A Mg(2+)-binding site is contributed by Glu439. Ser465 functions as the Proton acceptor in the catalytic mechanism.

It belongs to the IlvD/Edd family. In terms of assembly, homodimer. The cofactor is [2Fe-2S] cluster. Requires Mg(2+) as cofactor.

The catalysed reaction is (2R)-2,3-dihydroxy-3-methylbutanoate = 3-methyl-2-oxobutanoate + H2O. The enzyme catalyses (2R,3R)-2,3-dihydroxy-3-methylpentanoate = (S)-3-methyl-2-oxopentanoate + H2O. The protein operates within amino-acid biosynthesis; L-isoleucine biosynthesis; L-isoleucine from 2-oxobutanoate: step 3/4. Its pathway is amino-acid biosynthesis; L-valine biosynthesis; L-valine from pyruvate: step 3/4. Functions in the biosynthesis of branched-chain amino acids. Catalyzes the dehydration of (2R,3R)-2,3-dihydroxy-3-methylpentanoate (2,3-dihydroxy-3-methylvalerate) into 2-oxo-3-methylpentanoate (2-oxo-3-methylvalerate) and of (2R)-2,3-dihydroxy-3-methylbutanoate (2,3-dihydroxyisovalerate) into 2-oxo-3-methylbutanoate (2-oxoisovalerate), the penultimate precursor to L-isoleucine and L-valine, respectively. The protein is Dihydroxy-acid dehydratase of Endomicrobium trichonymphae.